The primary structure comprises 293 residues: MELLQQYLQQQQEELKIQRELHSSGQSQNAYQQQQQLEDDEEYDDDQLPLSPTQTEEFDYDNDYNDEEFYDEDDDFKEDDDEEEEEEDDEMYPIRQDNNIDDDDYEEDEEEQLLYPTNNNNNTTTTTPYTTYNNNNNNDINNNNNNNTKSEMTMIPTVSSNISLNPLQILEQYLNTQQQIQQKQFQKHQEELQIQQLQQNHPLQLLEQYLQQQQQIQQEQFFNHQRENQVPNSNSNSLNSSNENNNNNVNNNNNIINNNNNSINNNMNNSNNNNNNNNNGNKNPFFLDDFIYI.

Disordered stretches follow at residues 20-148 (ELHS…NNNT) and 226-283 (RENQ…GNKN). Composition is skewed to acidic residues over residues 37-47 (LEDDEEYDDDQ), 56-91 (EEFDYDNDYNDEEFYDEDDDFKEDDDEEEEEEDDEM), and 99-112 (NIDDDDYEEDEEEQ). Composition is skewed to low complexity over residues 117 to 148 (TNNNNNTTTTTPYTTYNNNNNNDINNNNNNNT) and 232 to 283 (NSNS…GNKN).

This is an uncharacterized protein from Dictyostelium discoideum (Social amoeba).